We begin with the raw amino-acid sequence, 204 residues long: Ras-related protein Rab-7L1 (204 aa).

GTP contacts are provided by Ser-33, Lys-34, His-35, Tyr-36, Lys-37, and Thr-39. The Effector region signature appears at 36 to 44; sequence YKSTVGVDF. Thr-71 is modified (phosphothreonine; by LRRK2). Ser-72 is modified (phosphoserine). GTP-binding residues include Lys-126, Val-156, and Lys-157. 2 S-geranylgeranyl cysteine lipidation sites follow: Cys-203 and Cys-204.

Belongs to the small GTPase superfamily. Rab family. In terms of assembly, interacts with LRRK2 (via the N-terminus); this interaction is direct and stimulates kinase activity. Expressed predominantly in kidney and much less in brain, heart, muscle, fat, liver, spleen, adrenal gland, ovary, thymus and lung. Not expressed in testis and intestine.

The protein resides in the cell membrane. It localises to the cytoplasm. Its subcellular location is the perinuclear region. The protein localises to the golgi apparatus. It is found in the golgi apparatus membrane. The protein resides in the trans-Golgi network. It localises to the cytoskeleton. The small GTPases Rab are key regulators in vesicle trafficking. Essential for maintaining the integrity of endosome-trans-Golgi network structure. Together with LRRK2, plays a role in the retrograde trafficking pathway for recycling proteins, such as mannose 6 phosphate receptor (M6PR), between lysosomes and the Golgi apparatus in a retromer-dependent manner. Recruits LRRK2 to the Golgi apparatus and stimulates LRRK2 kinase activity. Stimulates phosphorylation of RAB10 'Thr-73' by LRRK2. Regulates also neuronal process morphology in the intact central nervous system (CNS). The polypeptide is Ras-related protein Rab-7L1 (Rab29) (Rattus norvegicus (Rat)).